A 404-amino-acid chain; its full sequence is Magnesium transporter NIPA4 (404 aa).

The Extracellular portion of the chain corresponds to 1–55 (MELRVSNTSCENGSLLHLYCSSQEVLCQIVNDLSPEVPSNATFHSWQERIRQNYG). Residues N7, N12, and N40 are each glycosylated (N-linked (GlcNAc...) asparagine). The chain crosses the membrane as a helical span at residues 56–76 (FYIGLGLAFLSSFLIGSSVIL). At 77 to 102 (KKKGLLRLVATGATRAVDGGFGYLKD) the chain is on the cytoplasmic side. A helical membrane pass occupies residues 103-123 (AMWWAGFLTMAAGEVANFGAY). Position 124 (A124) is a topological domain, extracellular. The helical transmembrane segment at 125-145 (FAPATVVTPLGALSVLISAIL) threads the bilayer. Residues 146-153 (SSYFLRES) lie on the Cytoplasmic side of the membrane. A helical transmembrane segment spans residues 154–174 (LNLLGKLGCVICVAGSTVMVI). The Extracellular segment spans residues 175–195 (HAPEEEKVTTIMEMASKMKDT). The chain crosses the membrane as a helical span at residues 196–216 (GFIVFAVLLLVSCLILIFVIA). The Cytoplasmic segment spans residues 217–223 (PRYGQRN). Residues 224–244 (ILIYIIICSVIGAFSVAAVKG) traverse the membrane as a helical segment. Residues 245-261 (LGITIKNFFQGLPVVRH) lie on the Extracellular side of the membrane. A helical membrane pass occupies residues 262–282 (PLPYILSLILALSLSTQVNFL). Topologically, residues 283 to 293 (NRALDIFNTSL) are cytoplasmic. The chain crosses the membrane as a helical span at residues 294–314 (VFPIYYVFFTTVVVTSSIILF). The Extracellular segment spans residues 315 to 324 (KEWYSMSAVD). A helical transmembrane segment spans residues 325–345 (IAGTLSGFVTIILGVFMLHAF). At 346-404 (KDLDISCASLPHMHKNPPPSPAPEPTVIRLEDKNVLVDNIELASTSSPEEKPKVFIIHS) the chain is on the cytoplasmic side.

It belongs to the NIPA family. As to expression, highly expressed in brain, lung, stomach, keratinocytes and leukocytes, and in all other tissues tested except liver, thyroid and fetal brain.

The protein resides in the cell membrane. It catalyses the reaction Mg(2+)(in) = Mg(2+)(out). In terms of biological role, acts as a Mg(2+) transporter. Can also transport other divalent cations such as Ba(2+), Sr(2+) and Fe(2+) but to a much less extent than Mg(2+). May be a receptor for ligands (trioxilins A3 and B3) from the hepoxilin pathway. This is Magnesium transporter NIPA4 (NIPAL4) from Homo sapiens (Human).